Reading from the N-terminus, the 382-residue chain is Draxin-A (382 aa).

Residues 1-22 (MMSSSWCLPLALLFSTLAVSHS) form the signal peptide. Disordered regions lie at residues 28–213 (THAK…PPSP), 233–252 (LPTL…GKMQ), and 275–297 (VDAW…SGNV). A compositionally biased stretch (low complexity) spans 73 to 82 (RGAKASSGAG). Residues 139–149 (GPRKGRGQGHG) show a composition bias toward basic residues. The span at 190–201 (SVSSAAAATSPS) shows a compositional bias: low complexity. A compositionally biased stretch (basic residues) spans 281–290 (SRKKDKRRSK). Asn-291 and Asn-296 each carry an N-linked (GlcNAc...) asparagine glycan.

Belongs to the draxin family.

The protein resides in the secreted. In terms of biological role, chemorepulsive axon guidance protein required for the development of spinal cord and forebrain commissures. Acts as a chemorepulsive guidance protein for commissural axons during development. Able to inhibit or repel neurite outgrowth from dorsal spinal cord. The protein is Draxin-A (draxin-A) of Salmo salar (Atlantic salmon).